A 244-amino-acid polypeptide reads, in one-letter code: 15,16-dihydrobiliverdin:ferredoxin oxidoreductase (244 aa).

Belongs to the HY2 family.

It carries out the reaction 15,16-dihydrobiliverdin + oxidized 2[4Fe-4S]-[ferredoxin] = biliverdin IXalpha + reduced 2[4Fe-4S]-[ferredoxin] + 2 H(+). Functionally, catalyzes the two-electron reduction of biliverdin IX-alpha at the C15 methine bridge. In Nostoc punctiforme (strain ATCC 29133 / PCC 73102), this protein is 15,16-dihydrobiliverdin:ferredoxin oxidoreductase (pebA).